The primary structure comprises 458 residues: ATP synthase subunit beta (458 aa).

148-155 (GGAGVGKT) is a binding site for ATP.

The protein belongs to the ATPase alpha/beta chains family. In terms of assembly, F-type ATPases have 2 components, CF(1) - the catalytic core - and CF(0) - the membrane proton channel. CF(1) has five subunits: alpha(3), beta(3), gamma(1), delta(1), epsilon(1). CF(0) has three main subunits: a(1), b(2) and c(9-12). The alpha and beta chains form an alternating ring which encloses part of the gamma chain. CF(1) is attached to CF(0) by a central stalk formed by the gamma and epsilon chains, while a peripheral stalk is formed by the delta and b chains.

It localises to the cell inner membrane. The enzyme catalyses ATP + H2O + 4 H(+)(in) = ADP + phosphate + 5 H(+)(out). In terms of biological role, produces ATP from ADP in the presence of a proton gradient across the membrane. The catalytic sites are hosted primarily by the beta subunits. The protein is ATP synthase subunit beta of Actinobacillus succinogenes (strain ATCC 55618 / DSM 22257 / CCUG 43843 / 130Z).